The chain runs to 315 residues: Glutamyl-Q tRNA(Asp) synthetase (315 aa).

L-glutamate is bound by residues 23–27 (RFAPS) and Glu59. The 'HIGH' region signature appears at 26–36 (PSPTGPLHIGS). Positions 115, 117, 142, and 146 each coordinate Zn(2+). 2 residues coordinate L-glutamate: Tyr202 and Arg220. The 'KMSKS' region signature appears at 258–262 (KLSKQ). Lys261 is an ATP binding site.

It belongs to the class-I aminoacyl-tRNA synthetase family. GluQ subfamily. Zn(2+) is required as a cofactor.

Catalyzes the tRNA-independent activation of glutamate in presence of ATP and the subsequent transfer of glutamate onto a tRNA(Asp). Glutamate is transferred on the 2-amino-5-(4,5-dihydroxy-2-cyclopenten-1-yl) moiety of the queuosine in the wobble position of the QUC anticodon. This Ralstonia nicotianae (strain ATCC BAA-1114 / GMI1000) (Ralstonia solanacearum) protein is Glutamyl-Q tRNA(Asp) synthetase.